Consider the following 92-residue polypeptide: Small ribosomal subunit protein uS19 (92 aa).

The protein belongs to the universal ribosomal protein uS19 family.

Its function is as follows. Protein S19 forms a complex with S13 that binds strongly to the 16S ribosomal RNA. This chain is Small ribosomal subunit protein uS19, found in Psychromonas ingrahamii (strain DSM 17664 / CCUG 51855 / 37).